The primary structure comprises 507 residues: ATP synthase subunit alpha, chloroplastic (507 aa).

170–177 (GDRQTGKT) contacts ATP.

The protein belongs to the ATPase alpha/beta chains family. In terms of assembly, F-type ATPases have 2 components, CF(1) - the catalytic core - and CF(0) - the membrane proton channel. CF(1) has five subunits: alpha(3), beta(3), gamma(1), delta(1), epsilon(1). CF(0) has four main subunits: a, b, b' and c.

It localises to the plastid. Its subcellular location is the chloroplast thylakoid membrane. The enzyme catalyses ATP + H2O + 4 H(+)(in) = ADP + phosphate + 5 H(+)(out). Its function is as follows. Produces ATP from ADP in the presence of a proton gradient across the membrane. The alpha chain is a regulatory subunit. The protein is ATP synthase subunit alpha, chloroplastic of Marchantia polymorpha (Common liverwort).